The following is a 274-amino-acid chain: Transcriptional activator PerA (274 aa).

One can recognise an HTH araC/xylS-type domain in the interval 168–265; it reads DRVIKVIELD…NTTPKKYNGV (98 aa). DNA-binding regions (H-T-H motif) lie at residues 185–206 and 232–255; these read GDVSSSMFMSDSCLRKQLNKEN and IDEISCLVGFNSTSYFIKVFKEYY.

Its function is as follows. Could help in the transcriptional activator of eaeA expression in enteropathogenic E.coli. However, it seems that it is PerC which acts as an activator. The polypeptide is Transcriptional activator PerA (perA) (Escherichia coli O127:H6 (strain E2348/69 / EPEC)).